Reading from the N-terminus, the 446-residue chain is Argininosuccinate lyase (446 aa).

The protein belongs to the lyase 1 family. Argininosuccinate lyase subfamily.

The protein resides in the cytoplasm. It carries out the reaction 2-(N(omega)-L-arginino)succinate = fumarate + L-arginine. Its pathway is amino-acid biosynthesis; L-arginine biosynthesis; L-arginine from L-ornithine and carbamoyl phosphate: step 3/3. In Phocaeicola vulgatus (strain ATCC 8482 / DSM 1447 / JCM 5826 / CCUG 4940 / NBRC 14291 / NCTC 11154) (Bacteroides vulgatus), this protein is Argininosuccinate lyase.